Here is an 89-residue protein sequence, read N- to C-terminus: Large ribosomal subunit protein bL28 (89 aa).

This sequence belongs to the bacterial ribosomal protein bL28 family.

This is Large ribosomal subunit protein bL28 from Chlamydia abortus (strain DSM 27085 / S26/3) (Chlamydophila abortus).